We begin with the raw amino-acid sequence, 906 residues long: Cadherin-2 (906 aa).

Positions 1–25 (MCRIAGALRTLLPLLAALLQASVEA) are cleaved as a signal peptide. A propeptide spanning residues 26–159 (SGEIALCKTG…HSGHLQRQKR (134 aa)) is cleaved from the precursor. A phosphoserine; by FAM20C mark is found at Ser-96 and Ser-135. 5 consecutive Cadherin domains span residues 160–267 (DWVI…RPEF), 268–382 (LHQV…PPEF), 383–497 (TAMT…NPYF), 498–603 (APNP…DNAP), and 604–714 (QVLP…DVDR). Residues 160-724 (DWVIPPINLP…IVGAGLGTGA (565 aa)) lie on the Extracellular side of the membrane. Ca(2+) is bound at residue Glu-170. Asn-190 carries N-linked (GlcNAc...) asparagine glycosylation. Ca(2+) is bound by residues Asp-226, Glu-228, Asp-259, Met-260, Asn-261, Asp-262, and Asn-263. Residue Asn-273 is glycosylated (N-linked (GlcNAc...) asparagine). Ca(2+) is bound by residues Asp-293, Asp-295, and Asn-301. Asn-325 carries N-linked (GlcNAc...) asparagine glycosylation. Ca(2+) is bound at residue Asp-353. Residues Asn-402, Asn-572, Asn-651, and Asn-692 are each glycosylated (N-linked (GlcNAc...) asparagine). Residues 725-745 (IIAILLCIIILLILVLMFVVW) traverse the membrane as a helical segment. Residues 746–906 (MKRRDKERQA…LADMYGGGDD (161 aa)) lie on the Cytoplasmic side of the membrane. The segment covering 863–880 (SGSTAGSLSSLNSSSSGG) has biased composition (low complexity). The tract at residues 863-884 (SGSTAGSLSSLNSSSSGGEQDY) is disordered.

In terms of assembly, homodimer (via extracellular region). Can also form heterodimers with other cadherins (via extracellular region). Dimerization occurs in trans, i.e. with a cadherin chain from another cell. Interacts with CDCP1. Interacts with PCDH8; this complex may also include TAOK2. The interaction with PCDH8 may lead to internalization through TAOK2/p38 MAPK pathway. Identified in a complex containing FGFR4, NCAM1, CDH2, PLCG1, FRS2, SRC, SHC1, GAP43 and CTTN. May interact with OBSCN (via protein kinase domain 2). Interacts with FBXO45. In terms of processing, cleaved by MMP24. Ectodomain cleavage leads to the generation of a soluble 90 kDa N-terminal soluble fragment and a 45 kDa membrane-bound C-terminal fragment 1 (CTF1), which is further cleaved by gamma-secretase into a 35 kDa. Cleavage in neural stem cells by MMP24 affects CDH2-mediated anchorage of neural stem cells to ependymocytes in the adult subependymal zone, leading to modulate neural stem cell quiescence. May be phosphorylated by OBSCN.

Its subcellular location is the cell membrane. It is found in the sarcolemma. The protein resides in the cell junction. It localises to the cell surface. The protein localises to the desmosome. Its subcellular location is the adherens junction. Functionally, calcium-dependent cell adhesion protein; preferentially mediates homotypic cell-cell adhesion by dimerization with a CDH2 chain from another cell. Cadherins may thus contribute to the sorting of heterogeneous cell types. Acts as a regulator of neural stem cells quiescence by mediating anchorage of neural stem cells to ependymocytes in the adult subependymal zone: upon cleavage by MMP24, CDH2-mediated anchorage is affected, leading to modulate neural stem cell quiescence. Plays a role in cell-to-cell junction formation between pancreatic beta cells and neural crest stem (NCS) cells, promoting the formation of processes by NCS cells. Required for proper neurite branching. Required for pre- and postsynaptic organization. CDH2 may be involved in neuronal recognition mechanism. In hippocampal neurons, may regulate dendritic spine density. The protein is Cadherin-2 (CDH2) of Homo sapiens (Human).